The chain runs to 471 residues: Coagulation factor IX (471 aa).

Positions 1–28 are cleaved as a signal peptide; sequence MKHLNTVMAESPALITIFLLGYLLSTEC. The propeptide occupies 29–46; sequence AVFLDRENATKILTRPKR. Y47, N48, E53, E54, E61, E63, E66, E67, E72, E73, and E76 together coordinate Ca(2+). The Gla domain maps to 47 to 92; sequence YNSGKLEEFVRGNLERECIEERCSFEEAREVFENTEKTTEFWKQYV. 4-carboxyglutamate is present on residues E53, E54, E61, E63, E66, E67, E72, E73, E76, E79, and E82. E61 lines the Mg(2+) pocket. C64 and C69 form a disulfide bridge. E66 is a Mg(2+) binding site. E72 serves as a coordination point for Mg(2+). E76 lines the Mg(2+) pocket. Position 82 (E82) interacts with Ca(2+). E82 contacts Mg(2+). Residue T85 is glycosylated (O-linked (GalNAc...) threonine). Residues E86, D93, G94, and Q96 each coordinate Ca(2+). A 4-carboxyglutamate modification is found at E86. Residue E86 coordinates Mg(2+). The EGF-like 1; calcium-binding domain maps to 93 to 129; the sequence is DGDQCESNPCLNGGICKDDISSYECWCQVGFEGRNCE. Disulfide bonds link C97–C108, C102–C117, C119–C128, C134–C145, C141–C155, C157–C170, C178–C345, C262–C278, C392–C406, and C417–C445. S99 carries an O-linked (Glc...) serine glycan. The Ca(2+) site is built by D110 and D111. D110 carries the post-translational modification (3R)-3-hydroxyaspartate. S114 carries the phosphoserine modification. The 42-residue stretch at 130–171 folds into the EGF-like 2 domain; it reads LDATCNIKNGRCKQFCKNSPDNKVICSCTEGYQLAEDQKSCE. Residues 193–236 constitute a propeptide, activation peptide; the sequence is AETVFSNMDYENSTEAVFIQDDITDGAILNNVTESSESLNDFTR. At Y202 the chain carries Sulfotyrosine. The N-linked (GlcNAc...) asparagine glycan is linked to N204. Phosphoserine is present on S205. At T206 the chain carries Phosphothreonine; alternate. A glycan (O-linked (GalNAc...) threonine; alternate) is linked at T206. A glycan (N-linked (GlcNAc...) asparagine) is linked at N223. O-linked (GalNAc...) threonine glycans are attached at residues T225 and T235. In terms of domain architecture, Peptidase S1 spans 237–469; the sequence is VVGGENAKPG…YVNWIKEKTK (233 aa). H277 serves as the catalytic Charge relay system. Ca(2+)-binding residues include E291, N293, E298, and E301. D325 (charge relay system) is an active-site residue. The active-site Charge relay system is S421.

This sequence belongs to the peptidase S1 family. As to quaternary structure, heterodimer of a light chain and a heavy chain; disulfide-linked. Interacts (inactive and activated) with F11 (activated) in calcium-dependent manner. Interacts with SERPINC1. Post-translationally, activated by factor XIa, which excises the activation peptide. The propeptide can also be removed by snake venom protease. Activated by coagulation factor VIIa-tissue factor (F7-F3) complex in calcium-dependent manner. The iron and 2-oxoglutarate dependent 3-hydroxylation of aspartate and asparagine is (R) stereospecific within EGF domains. In terms of processing, predominantly O-glucosylated at Ser-99 by POGLUT1 in vitro. Detected in liver.

It is found in the secreted. It carries out the reaction Selective cleavage of Arg-|-Ile bond in factor X to form factor Xa.. Its function is as follows. Factor IX is a vitamin K-dependent plasma protein that participates in the intrinsic pathway of blood coagulation by converting factor X to its active form in the presence of Ca(2+) ions, phospholipids, and factor VIIIa. The polypeptide is Coagulation factor IX (F9) (Mus musculus (Mouse)).